Here is a 75-residue protein sequence, read N- to C-terminus: Putative defensin-like protein 119 (75 aa).

An N-terminal signal peptide occupies residues 1–25; sequence MAKSTIFAIFMIVFVLGMVTKETKG. Cystine bridges form between Cys29-Cys73, Cys39-Cys58, Cys44-Cys67, and Cys48-Cys69.

It belongs to the DEFL family.

The protein resides in the secreted. In Arabidopsis thaliana (Mouse-ear cress), this protein is Putative defensin-like protein 119 (LCR53).